A 591-amino-acid polypeptide reads, in one-letter code: Aspartate--tRNA ligase (591 aa).

E173 is an L-aspartate binding site. Residues 197 to 200 (QLFK) form an aspartate region. Residue R219 participates in L-aspartate binding. ATP contacts are provided by residues 219-221 (RDE) and Q228. H446 provides a ligand contact to L-aspartate. Position 482 (E482) interacts with ATP. R489 is an L-aspartate binding site. 534–537 (GLDR) contributes to the ATP binding site.

Belongs to the class-II aminoacyl-tRNA synthetase family. Type 1 subfamily. As to quaternary structure, homodimer.

It is found in the cytoplasm. The catalysed reaction is tRNA(Asp) + L-aspartate + ATP = L-aspartyl-tRNA(Asp) + AMP + diphosphate. In terms of biological role, catalyzes the attachment of L-aspartate to tRNA(Asp) in a two-step reaction: L-aspartate is first activated by ATP to form Asp-AMP and then transferred to the acceptor end of tRNA(Asp). This chain is Aspartate--tRNA ligase, found in Limosilactobacillus fermentum (strain NBRC 3956 / LMG 18251) (Lactobacillus fermentum).